Here is a 542-residue protein sequence, read N- to C-terminus: Membrane protein insertase YidC (542 aa).

The next 5 membrane-spanning stretches (helical) occupy residues 7–27, 338–358, 417–437, 455–475, and 494–514; these read LLVMGLLLVSFLIFTQWQQDF, FALLTFIQSIVTNWGLAIIGV, MGGCLPILIQMPIFIALYWTF, LSAQDPYYILPLLMGASMFLL, and FMPVMFTVFFLWFPSGLVLYW.

This sequence belongs to the OXA1/ALB3/YidC family. Type 1 subfamily. Interacts with the Sec translocase complex via SecD. Specifically interacts with transmembrane segments of nascent integral membrane proteins during membrane integration.

The protein localises to the cell inner membrane. Functionally, required for the insertion and/or proper folding and/or complex formation of integral membrane proteins into the membrane. Involved in integration of membrane proteins that insert both dependently and independently of the Sec translocase complex, as well as at least some lipoproteins. Aids folding of multispanning membrane proteins. In Actinobacillus pleuropneumoniae serotype 3 (strain JL03), this protein is Membrane protein insertase YidC.